The sequence spans 747 residues: MSGSHVPSANGPFSALTPSMWPQEILAKYAQEEATVEQPEFRYDEFGFRVDKEDADGIPYSGQLLEDPPQRLRWQAHLEFTHNHDVGDLTWDKIAVSLPRSEKLRSLVLAGVPHSMRPQLWMRLSGALQKKRNSELSYREIVKNSSNDETIAAKQIEKDLLRTMPSNACFAHVSGVGVPRLRRVLRALAWLYPEIGYCQGTGMVAACLLLFLEEDDAFWMMCAIIEDLLPASYFSTTLLGVQTDQRVLRHLIVQYLPRLDRLLQEHDIELSLITLHWFLTAFASVVHIRLLLRLWDLFFYEGSLVLFQATLGMLRLKEDELIQSENSASIFNTLSDIPSQLEDADLLLAEAMRLAGSLTAVAVETQRRKHLAYLLADQGQLLGAPATTGLSQVVRRRTQRRKSGITSLLFGEDDLEAMKAKNIKQTELVADLREAILRVARHFQCTDPKNCNVELTPDYSMESHQRDHESYVACSRGHPRRAKALLDFERHDDDELGFRKNDIITIVSQKDEHCWVGELNGLRGWFPAKFVEVLDERSKEYSIAGDDAVTEGVTDLVRGTLCPALKALLEHGLKKPSLLGGACHPWLFIEEAAGREVERDFDSVYSRLVLCKTYRLDEDGKVLTPEELLYRAVQSVNVTHDAAHAQMDVKLRSLICVGLNEQVLHLWLEVLCSSLPTVEKWYQPWSFLRSPGWVQIKCELRVLCCFAFSLSQDWELPAKREEEKKPLKEGVQDMLVKHHLFSWDIDG.

Residues 111–302 (GVPHSMRPQL…RLWDLFFYEG (192 aa)) form the Rab-GAP TBC domain. Residue S403 is modified to Phosphoserine. The stretch at 412–435 (EDDLEAMKAKNIKQTELVADLREA) forms a coiled coil. Residues 477–536 (GHPRRAKALLDFERHDDDELGFRKNDIITIVSQKDEHCWVGELNGLRGWFPAKFVEVLDE) form the SH3 domain. Residues 552-715 (GVTDLVRGTL…FAFSLSQDWE (164 aa)) enclose the RUN domain.

The protein belongs to the small G protein signaling modulator family. As to quaternary structure, interacts with GJA1. Interaction with GJA1 induces its degradation. Interacts via its RUN domain with the C-terminal region of NF2. Interacts with RAB3A, RAB4A, RAB5A, RAB8A, RAB11A, RAP1A, RAP1B, RAP2A, RAP2B and PDCD6I. No interaction with RAB27A.

It localises to the cytoplasm. Its function is as follows. May play a cooperative role in NF2-mediated growth suppression of cells. The protein is Small G protein signaling modulator 3 of Bos taurus (Bovine).